We begin with the raw amino-acid sequence, 126 residues long: Small ribosomal subunit protein uS8 (126 aa).

The protein belongs to the universal ribosomal protein uS8 family. As to quaternary structure, part of the 30S ribosomal subunit. Contacts proteins S5 and S12.

Functionally, one of the primary rRNA binding proteins, it binds directly to 16S rRNA central domain where it helps coordinate assembly of the platform of the 30S subunit. The chain is Small ribosomal subunit protein uS8 from Oleidesulfovibrio alaskensis (strain ATCC BAA-1058 / DSM 17464 / G20) (Desulfovibrio alaskensis).